The primary structure comprises 290 residues: uncharacterized protein (290 aa).

The AB hydrolase-1 domain occupies 30-274 (PTILLLHGFP…YDTGHFALET (245 aa)). Residue histidine 269 is part of the active site.

It belongs to the DmpD/TodF/XylF esterase family.

This is an uncharacterized protein from Saccharomyces cerevisiae (strain ATCC 204508 / S288c) (Baker's yeast).